A 146-amino-acid polypeptide reads, in one-letter code: Large ribosomal subunit protein bL19 (146 aa).

The interval 116–146 (ADRKRIDQDRAAERAAKEEAQKAQEPKASQE) is disordered. Residues 119–146 (KRIDQDRAAERAAKEEAQKAQEPKASQE) show a composition bias toward basic and acidic residues.

Part of the 50S risobomal subunit. Contacts protein L14. Forms a bridge to the 30S subunit in the 70S ribosome, contacting the 16S rRNA.

Functionally, contacts the 16S rRNA of the 30S subunit (part of bridge B6), connecting the 2 subunits. The chain is Large ribosomal subunit protein bL19 (rplS) from Thermus thermophilus (strain ATCC 27634 / DSM 579 / HB8).